Here is a 29-residue protein sequence, read N- to C-terminus: Kalata-B15 (29 aa).

Residues 1-29 constitute a cross-link (cyclopeptide (Gly-Asp)); the sequence is GLPVCGESCFGGSCYTPGCSCTWPICTRD. Cystine bridges form between Cys5–Cys19, Cys9–Cys21, and Cys14–Cys26.

In terms of processing, this is a cyclic peptide.

Probably participates in a plant defense mechanism. In Oldenlandia affinis, this protein is Kalata-B15.